The chain runs to 1723 residues: Lymphocyte antigen 75 (1723 aa).

An N-terminal signal peptide occupies residues 1–27 (MRTGRVTPGLAAGLLLLLLRSFGLVEP). At 28-1667 (SESSGNDPFT…AVCKIPLSPD (1640 aa)) the chain is on the extracellular side. Residues 33 to 182 (NDPFTIVHEN…FLIGETWYHD (150 aa)) form the Ricin B-type lectin domain. A glycan (N-linked (GlcNAc...) asparagine) is linked at asparagine 135. In terms of domain architecture, Fibronectin type-II spans 164–211 (SYGRPCEFPFLIGETWYHDCIHDEDHSGPWCATTLSYEYDQKWGICLL). Disulfide bonds link cysteine 169–cysteine 194, cysteine 183–cysteine 209, cysteine 247–cysteine 340, and cysteine 317–cysteine 332. A C-type lectin 1 domain is found at 225–341 (QIGSCYQFNN…CESQQPYVCK (117 aa)). Residues asparagine 345 and asparagine 377 are each glycosylated (N-linked (GlcNAc...) asparagine). C-type lectin domains follow at residues 368-486 (NNGF…YVCK), 493-625 (KDAE…ICKK), and 652-791 (SSLS…WVCQ). Intrachain disulfides connect cysteine 389/cysteine 485 and cysteine 462/cysteine 477. N-linked (GlcNAc...) asparagine glycosylation occurs at asparagine 529. Intrachain disulfides connect cysteine 597-cysteine 614, cysteine 678-cysteine 790, and cysteine 752-cysteine 782. Asparagine 843 and asparagine 865 each carry an N-linked (GlcNAc...) asparagine glycan. Residue tyrosine 934 is modified to Phosphotyrosine. N-linked (GlcNAc...) asparagine glycosylation is found at asparagine 935, asparagine 1077, and asparagine 1104. One can recognise a C-type lectin 5 domain in the interval 959-1092 (FQNKCFLKVN…ERHSLSLCQK (134 aa)). Cysteine 1061 and cysteine 1081 are oxidised to a cystine. The region spanning 1111-1223 (YLNNLYKIIS…DNQPGAICYY (113 aa)) is the C-type lectin 6 domain. Residues cysteine 1198 and cysteine 1212 are joined by a disulfide bond. N-linked (GlcNAc...) asparagine glycans are attached at residues asparagine 1226, asparagine 1321, and asparagine 1393. One can recognise a C-type lectin 7 domain in the interval 1252 to 1375 (FQNSCYNFMI…VIEETLHFYQ (124 aa)). 2 consecutive C-type lectin domains span residues 1402–1514 (YKDG…ICYK) and 1543–1662 (YGGH…VCKI). A disulfide bond links cysteine 1489 and cysteine 1503. Residues asparagine 1594 and asparagine 1627 are each glycosylated (N-linked (GlcNAc...) asparagine). Cysteines 1636 and 1651 form a disulfide. Residues 1668–1692 (YTGIAILFAVLCLLGLISLAIWFLL) traverse the membrane as a helical segment. The Cytoplasmic segment spans residues 1693 to 1723 (QRSHIRWTGFSSVRYEHGTNEDEVMLPSFHD). A phosphoserine mark is found at serine 1704 and serine 1720.

In terms of processing, N-glycosylated. In terms of tissue distribution, expressed in dendritic and thymic epithelial cells and lymph nodes.

Its subcellular location is the membrane. Functionally, acts as an endocytic receptor to direct captured antigens from the extracellular space to a specialized antigen-processing compartment. Causes reduced proliferation of B lymphocytes. This chain is Lymphocyte antigen 75 (Ly75), found in Mus musculus (Mouse).